The chain runs to 280 residues: Large ribosomal subunit protein uL2 (280 aa).

Disordered stretches follow at residues 27–58 (STPE…GGGH) and 226–280 (MNPV…KHGR). 2 stretches are compositionally biased toward basic residues: residues 37–58 (LHGH…GGGH) and 268–280 (IVRR…KHGR).

Belongs to the universal ribosomal protein uL2 family. Part of the 50S ribosomal subunit. Forms a bridge to the 30S subunit in the 70S ribosome.

One of the primary rRNA binding proteins. Required for association of the 30S and 50S subunits to form the 70S ribosome, for tRNA binding and peptide bond formation. It has been suggested to have peptidyltransferase activity; this is somewhat controversial. Makes several contacts with the 16S rRNA in the 70S ribosome. The protein is Large ribosomal subunit protein uL2 of Mycobacterium ulcerans (strain Agy99).